The primary structure comprises 584 residues: Tricyclene synthase 1e20, chloroplastic (584 aa).

The transit peptide at 1–45 (MIYIWICFYLQTTLLPCSLSTRTKFAICHNTSKLHRAAYKTSRWN) directs the protein to the chloroplast. 3 N-linked (GlcNAc...) asparagine glycosylation sites follow: Asn30, Asn209, and Asn322. Mg(2+)-binding residues include Asp341 and Asp345. The DDXXD motif signature appears at 341–345 (DDIFD). N-linked (GlcNAc...) asparagine glycosylation is found at Asn387 and Asn468. 3 residues coordinate Mg(2+): Asn485, Ser489, and Glu493. Asn512 carries an N-linked (GlcNAc...) asparagine glycan.

The protein belongs to the terpene synthase family. Tpsg subfamily. Requires Mg(2+) as cofactor. It depends on Mn(2+) as a cofactor. As to expression, accumulates at low levels in flowers; mostly expressed in both upper and lower petal lobes, and, to a lower extent, in tube and stamens.

Its subcellular location is the plastid. The protein localises to the chloroplast stroma. The enzyme catalyses (2E)-geranyl diphosphate = tricyclene + diphosphate. It catalyses the reaction (2E)-geranyl diphosphate = beta-myrcene + diphosphate. It participates in secondary metabolite biosynthesis; terpenoid biosynthesis. Its function is as follows. May contribute to floral scent emission. This chain is Tricyclene synthase 1e20, chloroplastic (1e20), found in Antirrhinum majus (Garden snapdragon).